The primary structure comprises 340 residues: Organic solute transporter subunit alpha (340 aa).

The Extracellular segment spans residues 1–52 (MEPDRTQIRLDPRYTADLLEILKTNYSVPSACFSYPPTAAQLLRALGPVDIS). An N-linked (GlcNAc...) asparagine glycan is attached at N25. The helical transmembrane segment at 53–73 (LMVIMTLFVLGSIAIFLEAAV) threads the bilayer. The Cytoplasmic portion of the chain corresponds to 74–87 (YLHKNTRCPIKRKT). A helical membrane pass occupies residues 88 to 108 (LIWCSSSPTIVSAFSCFGLWI). The Extracellular portion of the chain corresponds to 109 to 110 (PR). A helical transmembrane segment spans residues 111–131 (ALTLVEMAITTFYSMCFYLLM). The Cytoplasmic portion of the chain corresponds to 132–186 (QAMVEGFGGKEAVLRTLKDTPVMIHTGPCCCCCPCCPRIKITRKRLQLLLLGPIQ). Residues 187–207 (YAFFKISLTLVGLFLIPDGIF) form a helical membrane-spanning segment. Residues 208-219 (DPSDISEGSTAL) lie on the Extracellular side of the membrane. A helical membrane pass occupies residues 220–240 (WINTFLGVSTLSALWTIGIIF). The Cytoplasmic portion of the chain corresponds to 241–255 (RQARLHLGEQNIGAK). A helical transmembrane segment spans residues 256-276 (FVLFQALLILSALQPSIFSVL). At 277-295 (ASGGQIACSPPFSSKIRSQ) the chain is on the extracellular side. Residues 296–316 (VMNCHLLILESFLITVLTRIY) form a helical membrane-spanning segment. The Cytoplasmic segment spans residues 317 to 340 (YRRKDDKLGYEPFSSPDQDLNLKA). Phosphoserine is present on S330.

Belongs to the OST-alpha family. Interacts with SLC51B. The Ost-alpha/Ost-beta complex is a heterodimer composed of alpha (SLC51A) and beta (SLC51B) subunit.

The protein resides in the cell membrane. It localises to the endoplasmic reticulum membrane. The enzyme catalyses taurocholate(out) = taurocholate(in). The catalysed reaction is estrone 3-sulfate(out) = estrone 3-sulfate(in). It carries out the reaction dehydroepiandrosterone 3-sulfate(out) = dehydroepiandrosterone 3-sulfate(in). It catalyses the reaction tauroursodeoxycholate(out) = tauroursodeoxycholate(in). The enzyme catalyses glycoursodeoxycholate(out) = glycoursodeoxycholate(in). The catalysed reaction is glycocholate(out) = glycocholate(in). It carries out the reaction taurochenodeoxycholate(out) = taurochenodeoxycholate(in). It catalyses the reaction glycochenodeoxycholate(out) = glycochenodeoxycholate(in). The enzyme catalyses taurodeoxycholate(out) = taurodeoxycholate(in). The catalysed reaction is glycodeoxycholate(out) = glycodeoxycholate(in). It carries out the reaction prostaglandin E2(out) = prostaglandin E2(in). Its function is as follows. Essential component of the Ost-alpha/Ost-beta complex, a heterodimer that acts as the intestinal basolateral transporter responsible for bile acid export from enterocytes into portal blood. Efficiently transports the major species of bile acids (taurocholate). Taurine conjugates are transported more efficiently across the basolateral membrane than glycine-conjugated bile acids. Can also transport steroids such as estrone 3-sulfate and dehydroepiandrosterone 3-sulfate, therefore playing a role in the enterohepatic circulation of sterols. Able to transport eicosanoids such as prostaglandin E2. The protein is Organic solute transporter subunit alpha (SLC51A) of Bos taurus (Bovine).